Reading from the N-terminus, the 153-residue chain is Ribonuclease H (153 aa).

The 142-residue stretch at 1–142 folds into the RNase H type-1 domain; it reads MTDQIEIFTD…ADELARRGVD (142 aa). Mg(2+) is bound by residues Asp-10, Glu-48, Asp-70, and Asp-134.

It belongs to the RNase H family. Monomer. Mg(2+) serves as cofactor.

Its subcellular location is the cytoplasm. It catalyses the reaction Endonucleolytic cleavage to 5'-phosphomonoester.. In terms of biological role, endonuclease that specifically degrades the RNA of RNA-DNA hybrids. This chain is Ribonuclease H, found in Aromatoleum aromaticum (strain DSM 19018 / LMG 30748 / EbN1) (Azoarcus sp. (strain EbN1)).